The sequence spans 222 residues: UPF0502 protein Shewmr7_1629 (222 aa).

It belongs to the UPF0502 family.

The polypeptide is UPF0502 protein Shewmr7_1629 (Shewanella sp. (strain MR-7)).